A 407-amino-acid chain; its full sequence is MTTFSEKEKIQLLADIVELQTENNNEIDVCNYLKDLFDKYDIKSEILKVNEHRANFVAEIGSGSPILALSGHMDVVDAGNQDNWTYPPFQLTEKDDKLYGRGTTDMKGGLMALVIALIELKEQNQLPQGTIRLLATAGEEKEQEGAKLLADKGYLDDVDGLMIAEPTGSGIYYAHKGSMSCKVTATGKAVHSSVPFIGDNAIDTLLEFYNQFKEKYAELKKNDTKHELDVAPMFKSLIGKDISEEDANYASGLTAVCSIINGGKQFNSVPDEASLEFNVRPVPEYDNDFIESFFQNIINNVDSNKLSLDIPSNHRPVTSDKNSKLITTIKDVASSYVDKDDIFVSALVGATDASSFLGDNKDNVDLAIFGPGNPLMAHQIDEYIEKDMYLKYIDIFKEASIQYLKEK.

His72 is a binding site for Zn(2+). Asp74 is a catalytic residue. Asp105 contributes to the Zn(2+) binding site. The Proton acceptor role is filled by Glu139. Zn(2+)-binding residues include Glu140, Glu165, and His378.

Belongs to the peptidase M20A family. It depends on Zn(2+) as a cofactor. Co(2+) serves as cofactor.

It catalyses the reaction N-succinyl-(2S,6S)-2,6-diaminopimelate + H2O = (2S,6S)-2,6-diaminopimelate + succinate. It participates in amino-acid biosynthesis; L-lysine biosynthesis via DAP pathway; LL-2,6-diaminopimelate from (S)-tetrahydrodipicolinate (succinylase route): step 3/3. In Staphylococcus aureus (strain MRSA252), this protein is Probable succinyl-diaminopimelate desuccinylase (dapE).